The primary structure comprises 2298 residues: Protein Ycf2 (2298 aa).

Position 1640–1647 (1640–1647) interacts with ATP; sequence GSIGTGRS.

The protein belongs to the Ycf2 family.

It localises to the plastid. The protein resides in the chloroplast stroma. Functionally, probable ATPase of unknown function. Its presence in a non-photosynthetic plant (Epifagus virginiana) and experiments in tobacco indicate that it has an essential function which is probably not related to photosynthesis. In Carica papaya (Papaya), this protein is Protein Ycf2.